Here is a 65-residue protein sequence, read N- to C-terminus: Large ribosomal subunit protein bL35 (65 aa).

A compositionally biased stretch (basic residues) spans 1–10 (MPKMKSKSSA). The disordered stretch occupies residues 1 to 21 (MPKMKSKSSAKMRFSVRAGGT).

Belongs to the bacterial ribosomal protein bL35 family.

The chain is Large ribosomal subunit protein bL35 from Polynucleobacter necessarius subsp. necessarius (strain STIR1).